The chain runs to 127 residues: Aspartate 1-decarboxylase (127 aa).

Serine 25 acts as the Schiff-base intermediate with substrate; via pyruvic acid in catalysis. Residue serine 25 is modified to Pyruvic acid (Ser). A substrate-binding site is contributed by threonine 57. The Proton donor role is filled by tyrosine 58. Residue 73-75 (GAA) coordinates substrate.

The protein belongs to the PanD family. As to quaternary structure, heterooctamer of four alpha and four beta subunits. Requires pyruvate as cofactor. Is synthesized initially as an inactive proenzyme, which is activated by self-cleavage at a specific serine bond to produce a beta-subunit with a hydroxyl group at its C-terminus and an alpha-subunit with a pyruvoyl group at its N-terminus.

It localises to the cytoplasm. The catalysed reaction is L-aspartate + H(+) = beta-alanine + CO2. It participates in cofactor biosynthesis; (R)-pantothenate biosynthesis; beta-alanine from L-aspartate: step 1/1. Its function is as follows. Catalyzes the pyruvoyl-dependent decarboxylation of aspartate to produce beta-alanine. The polypeptide is Aspartate 1-decarboxylase (Clostridium acetobutylicum (strain ATCC 824 / DSM 792 / JCM 1419 / IAM 19013 / LMG 5710 / NBRC 13948 / NRRL B-527 / VKM B-1787 / 2291 / W)).